Consider the following 553-residue polypeptide: General alpha-glucoside permease (553 aa).

Polar residues predominate over residues 1–21; the sequence is MSVDENQLENGQLLSSENEAS. Positions 1 to 26 are disordered; it reads MSVDENQLENGQLLSSENEASSPFKE. At 1–33 the chain is on the cytoplasmic side; sequence MSVDENQLENGQLLSSENEASSPFKESIPSRSS. A helical transmembrane segment spans residues 34–54; it reads LYLIALTVSLLGVQLTWSVEL. Topologically, residues 55–72 are extracellular; it reads GYGTPYLFSLGLRKEWTS. A helical membrane pass occupies residues 73-93; the sequence is IIWIAGPLTGILIQPIAGILS. Residues 94–111 lie on the Cytoplasmic side of the membrane; sequence DRVNSRIGRRRPFMLCAS. Residues 112-132 form a helical membrane-spanning segment; the sequence is LLGTFSLFLMGWAPDICLFIF. Topologically, residues 133-140 are extracellular; the sequence is SNEVLMKR. Residues 141–161 form a helical membrane-spanning segment; it reads VTIVLATISIYLLDVAVNVVM. The Cytoplasmic segment spans residues 162–186; that stretch reads ASTRSLIVDSVRSDQQHEANSWAGR. Residues 187 to 207 traverse the membrane as a helical segment; sequence MIGVGNVLGYLLGYLPLYRIF. Residues 208–216 are Extracellular-facing; that stretch reads SFLNFTQLQ. Residues 217-237 traverse the membrane as a helical segment; the sequence is VFCVLASISLVLTVTITTIFV. At 238–280 the chain is on the cytoplasmic side; it reads SERRFPPVEHEKSVAGEIFEFFTTMRQSITALPFTLKRICFVQ. The chain crosses the membrane as a helical span at residues 281–301; the sequence is FFAYFGWFPFLFYITTYVGIL. Over 302–322 the chain is Extracellular; the sequence is YLRHAPKGHEEDWDMATRQGS. A helical membrane pass occupies residues 323–343; the sequence is FALLLFAIISLAANTALPLLL. Residues 344-424 are Cytoplasmic-facing; sequence EDTEDDEEDE…SKVQIKGLTL (81 aa). A disordered region spans residues 368-399; that stretch reads NDLGNIRTGTNTPRLGNLSETTSFRSENEPSR. The span at 374-392 shows a compositional bias: polar residues; that stretch reads RTGTNTPRLGNLSETTSFR. Residues 425 to 445 traverse the membrane as a helical segment; sequence PILWLSSHVLFGVCMLSTIFL. Residues 446 to 452 are Extracellular-facing; sequence QTSWQAQ. A helical transmembrane segment spans residues 453 to 473; sequence AMVAICGLSWACTLWIPYSLF. The Cytoplasmic portion of the chain corresponds to 474–494; the sequence is SSEIGKLGLRESSGKMIGVHN. A helical transmembrane segment spans residues 495–515; it reads VFISAPQVLSTIIATIVFIQS. Residues 516 to 521 are Extracellular-facing; that stretch reads EGSHRD. A helical transmembrane segment spans residues 522-542; it reads IADNSIAWVLRIGGISAFLAA. Over 543–553 the chain is Cytoplasmic; the sequence is YQCRHLLPINF.

It belongs to the glycoside-pentoside-hexuronide (GPH) cation symporter transporter (TC 2.A.2.4) family.

The protein localises to the membrane. Functionally, responsible for the transport of maltose and sucrose into the cell, with the concomitant uptake of protons (symport system). In Schizosaccharomyces pombe (strain 972 / ATCC 24843) (Fission yeast), this protein is General alpha-glucoside permease (sut1).